The chain runs to 2458 residues: Highly reducing polyketide synthase alnA (2458 aa).

One can recognise a Ketosynthase family 3 (KS3) domain in the interval 48 to 473 (TMPIAIVGMA…GANAHVILDD (426 aa)). Residues Cys221, His356, and His396 each act as for beta-ketoacyl synthase activity in the active site. A disordered region spans residues 488-515 (HTTLSESEDSSDSGLEMDSSTSDSGEGQ). Positions 499–515 (DSGLEMDSSTSDSGEGQ) are enriched in low complexity. The segment at 609-932 (VFTGQGAQWP…PYMSVLSRGK (324 aa)) is malonyl-CoA:ACP transacylase (MAT) domain. The active-site For malonyltransferase activity is Ser697. The tract at residues 1000–1130 (NDLLGVPVAQ…GSFSLHYEDA (131 aa)) is N-terminal hotdog fold. A PKS/mFAS DH domain is found at 1000 to 1307 (NDLLGVPVAQ…VTEVSAGAST (308 aa)). Residues 1001-1305 (DLLGVPVAQQ…MTVTEVSAGA (305 aa)) are dehydratase (DH) domain. The active-site Proton acceptor; for dehydratase activity is the His1032. Positions 1148 to 1307 (TRACRKLDVE…VTEVSAGAST (160 aa)) are C-terminal hotdog fold. Residue Asp1218 is the Proton donor; for dehydratase activity of the active site. The tract at residues 1740-2051 (GSPSQARWVP…GQQQHERVAA (312 aa)) is enoylreductase (ER) domain. The tract at residues 2076-2264 (KPDATYILAG…VTDASHFNEN (189 aa)) is ketoreductase (KR) domain. The region spanning 2359–2441 (STTVAQAHEV…RLALKIVSKS (83 aa)) is the Carrier domain. At Ser2401 the chain carries O-(pantetheine 4'-phosphoryl)serine.

The protein operates within polyketide biosynthesis. Its function is as follows. Highly reducing polyketide synthase; part of the gene cluster that mediates the biosynthesis of asperlin, a polyketide showing anti-inflammatory, antitumor and antibiotic activities. The first step of the asperlin biosynthesis is the production of the intermediate 2,4,6-octatrienoic acid by the highly redusing polyketide synthase alnA with cleavage of the PKS product by the esterase alnB. 2,4,6-octatrienoic acid is further converted to asperlin via several steps involving the remaining enzymes from the cluster. This Emericella nidulans (strain FGSC A4 / ATCC 38163 / CBS 112.46 / NRRL 194 / M139) (Aspergillus nidulans) protein is Highly reducing polyketide synthase alnA.